The sequence spans 123 residues: Large ribosomal subunit protein uL18 (123 aa).

It belongs to the universal ribosomal protein uL18 family. In terms of assembly, part of the 50S ribosomal subunit; part of the 5S rRNA/L5/L18/L25 subcomplex. Contacts the 5S and 23S rRNAs.

In terms of biological role, this is one of the proteins that bind and probably mediate the attachment of the 5S RNA into the large ribosomal subunit, where it forms part of the central protuberance. In Chlamydia trachomatis serovar L2 (strain ATCC VR-902B / DSM 19102 / 434/Bu), this protein is Large ribosomal subunit protein uL18.